The primary structure comprises 414 residues: Glucose-1-phosphate adenylyltransferase (414 aa).

Alpha-D-glucose 1-phosphate-binding positions include Tyr99, Gly164, 181 to 182, and Ser199; that span reads EK.

Belongs to the bacterial/plant glucose-1-phosphate adenylyltransferase family. In terms of assembly, homotetramer.

The catalysed reaction is alpha-D-glucose 1-phosphate + ATP + H(+) = ADP-alpha-D-glucose + diphosphate. The protein operates within glycan biosynthesis; glycogen biosynthesis. Functionally, involved in the biosynthesis of ADP-glucose, a building block required for the elongation reactions to produce glycogen. Catalyzes the reaction between ATP and alpha-D-glucose 1-phosphate (G1P) to produce pyrophosphate and ADP-Glc. This chain is Glucose-1-phosphate adenylyltransferase, found in Bifidobacterium adolescentis (strain ATCC 15703 / DSM 20083 / NCTC 11814 / E194a).